A 391-amino-acid polypeptide reads, in one-letter code: MTQVSNRETPRGVAVLSRFLASESAGGIVLMAAALAALIVANSSLSASYFSILHSVWLGLSVELWINDGLMAIFFLMVGLEIKREVLAGGLATWGQRALPGFAAAGGMLVPALIYIAINWGNPQTLSGWAIPAATDIAFALGVLSLLGNRVPTSLKVFLAALAILDDLGAVTIIAFFYSSGLNLPMLAAAFATLAVLIALNRLNVRRLLPYLLLGALLWFFVLQSGVHATLAGVALALCIPMGKPEEEARSPLLFLEEKMHYWVAFAVVPIFGFANAGVSLSGITLANLIDPVPMGVALGLFVGKQIGVFLAAVLAIRAGLATLPENSNWVQLYGVAILCGIGFTMSLFIGNLAFPGSQHLIDEVKVGVLIGSGLAAIAGILLLRTRFSRH.

Helical transmembrane passes span 19-39 (FLAS…AALI), 56-76 (VWLG…IFFL), 98-118 (ALPG…YIAI), 128-148 (GWAI…SLLG), 157-177 (VFLA…IAFF), 180-200 (SGLN…LIAL), 208-228 (LLPY…SGVH), 264-284 (VAFA…LSGI), 297-317 (VALG…VLAI), 335-355 (GVAI…NLAF), and 364-384 (EVKV…ILLL).

It belongs to the NhaA Na(+)/H(+) (TC 2.A.33) antiporter family.

Its subcellular location is the cell inner membrane. The catalysed reaction is Na(+)(in) + 2 H(+)(out) = Na(+)(out) + 2 H(+)(in). Its function is as follows. Na(+)/H(+) antiporter that extrudes sodium in exchange for external protons. The protein is Na(+)/H(+) antiporter NhaA 1 of Pseudomonas savastanoi pv. phaseolicola (strain 1448A / Race 6) (Pseudomonas syringae pv. phaseolicola (strain 1448A / Race 6)).